The following is a 177-amino-acid chain: Large ribosomal subunit protein uL6 (177 aa).

The protein belongs to the universal ribosomal protein uL6 family. In terms of assembly, part of the 50S ribosomal subunit.

Functionally, this protein binds to the 23S rRNA, and is important in its secondary structure. It is located near the subunit interface in the base of the L7/L12 stalk, and near the tRNA binding site of the peptidyltransferase center. In Vibrio cholerae serotype O1 (strain ATCC 39315 / El Tor Inaba N16961), this protein is Large ribosomal subunit protein uL6.